Consider the following 433-residue polypeptide: Dihydroorotase (433 aa).

Zn(2+) contacts are provided by histidine 63 and histidine 65. Substrate contacts are provided by residues 65–67 (HLR) and asparagine 97. Residues aspartate 155, histidine 182, and histidine 235 each contribute to the Zn(2+) site. Asparagine 283 contributes to the substrate binding site. Residue aspartate 310 coordinates Zn(2+). The active site involves aspartate 310. Position 314 (histidine 314) interacts with substrate.

Belongs to the metallo-dependent hydrolases superfamily. DHOase family. Class I DHOase subfamily. The cofactor is Zn(2+).

The enzyme catalyses (S)-dihydroorotate + H2O = N-carbamoyl-L-aspartate + H(+). The protein operates within pyrimidine metabolism; UMP biosynthesis via de novo pathway; (S)-dihydroorotate from bicarbonate: step 3/3. Catalyzes the reversible cyclization of carbamoyl aspartate to dihydroorotate. This Anaeromyxobacter dehalogenans (strain 2CP-C) protein is Dihydroorotase.